Consider the following 277-residue polypeptide: Phosphatidylglycerol--prolipoprotein diacylglyceryl transferase (277 aa).

4 helical membrane-spanning segments follow: residues 22–42 (ISIRYYGLLWAIGIFFAYIVV), 59–79 (LFFYCFFGILIGARLGHCLFY), 107–127 (GYEGLASHGGTLGLIISLWLY), and 133–153 (MNYMDVVDMIAVATPITACFI). Residue Arg154 participates in a 1,2-diacyl-sn-glycero-3-phospho-(1'-sn-glycerol) binding. The next 3 membrane-spanning stretches (helical) occupy residues 186 to 206 (PAQLYEAIAYFILFLVMMFLY), 216 to 236 (GFFFGLCLTAIFTFRFFVEFL), and 251 to 271 (MGQWLSIPFVIIGIYFMFFYG).

This sequence belongs to the Lgt family.

The protein localises to the cell inner membrane. It carries out the reaction L-cysteinyl-[prolipoprotein] + a 1,2-diacyl-sn-glycero-3-phospho-(1'-sn-glycerol) = an S-1,2-diacyl-sn-glyceryl-L-cysteinyl-[prolipoprotein] + sn-glycerol 1-phosphate + H(+). Its pathway is protein modification; lipoprotein biosynthesis (diacylglyceryl transfer). Functionally, catalyzes the transfer of the diacylglyceryl group from phosphatidylglycerol to the sulfhydryl group of the N-terminal cysteine of a prolipoprotein, the first step in the formation of mature lipoproteins. This chain is Phosphatidylglycerol--prolipoprotein diacylglyceryl transferase, found in Bacteroides fragilis (strain ATCC 25285 / DSM 2151 / CCUG 4856 / JCM 11019 / LMG 10263 / NCTC 9343 / Onslow / VPI 2553 / EN-2).